A 303-amino-acid chain; its full sequence is Methionyl-tRNA formyltransferase (303 aa).

Residue 109-112 (SLLP) participates in (6S)-5,6,7,8-tetrahydrofolate binding.

It belongs to the Fmt family.

It carries out the reaction L-methionyl-tRNA(fMet) + (6R)-10-formyltetrahydrofolate = N-formyl-L-methionyl-tRNA(fMet) + (6S)-5,6,7,8-tetrahydrofolate + H(+). In terms of biological role, attaches a formyl group to the free amino group of methionyl-tRNA(fMet). The formyl group appears to play a dual role in the initiator identity of N-formylmethionyl-tRNA by promoting its recognition by IF2 and preventing the misappropriation of this tRNA by the elongation apparatus. The sequence is that of Methionyl-tRNA formyltransferase from Helicobacter pylori (strain ATCC 700392 / 26695) (Campylobacter pylori).